Reading from the N-terminus, the 67-residue chain is Large ribosomal subunit protein bL35 (67 aa).

Residues 1 to 16 (MPKMKTKSSAKKRFRV) show a composition bias toward basic residues. Residues 1 to 24 (MPKMKTKSSAKKRFRVRPGGTVKR) form a disordered region.

Belongs to the bacterial ribosomal protein bL35 family.

The polypeptide is Large ribosomal subunit protein bL35 (Verminephrobacter eiseniae (strain EF01-2)).